The primary structure comprises 919 residues: Tight junction protein ZO-3 (919 aa).

Residues 11-93 form the PDZ 1 domain; it reads TATLSKDPRR…MANITVKRPR (83 aa). Residues 92 to 173 are disordered; that stretch reads PRRIHLPATK…SPGGGSEANG (82 aa). A Phosphoserine modification is found at Ser-112. A compositionally biased stretch (basic and acidic residues) spans 117-131; the sequence is GPQRVEEVDQGRGYD. Ser-136 carries the phosphoserine modification. A compositionally biased stretch (basic residues) spans 147 to 163; the sequence is RRPRPGRRGRAGSHGRR. 4 positions are modified to phosphoserine: Ser-164, Ser-169, Ser-203, and Ser-319. One can recognise a PDZ 2 domain in the interval 195 to 272; the sequence is SVLVKRRDSE…KLSLLVLRDR (78 aa). Positions 279 to 377 are disordered; sequence IPPAVSDSDS…SSQSMEDRGY (99 aa). Phosphothreonine is present on Thr-325. At Ser-327 the chain carries Phosphoserine. Residues 332 to 360 show a composition bias toward basic and acidic residues; the sequence is PRLRRESSVDSRTISEPDEQRSELPRESS. At Ser-371 the chain carries Phosphoserine. Residues 380 to 446 form the PDZ 3 domain; it reads DTRVVRFLKG…LTREEAVQFL (67 aa). One can recognise an SH3 domain in the interval 475–549; the sequence is GDSFYIRTHF…PNQSRAEQLA (75 aa). Residues 580–761 enclose the Guanylate kinase-like domain; that stretch reads LRRGAKKTTQ…WYQELKAIIR (182 aa). At Ser-591 the chain carries Phosphoserine. A compositionally biased stretch (low complexity) spans 791–801; the sequence is ADSSADLSCDS. Disordered stretches follow at residues 791 to 886 and 899 to 919; these read ADSS…DSMR and RVHD…ATDL. A compositionally biased stretch (gly residues) spans 812–828; that stretch reads EGGAYTDGEGYTDGEGG. Phosphoserine occurs at positions 856, 905, and 906.

This sequence belongs to the MAGUK family. In terms of assembly, interacts with occludin OCLN, claudins and TPJ1. Interacts with PATJ. Interacts with UBN1. Interacts with FASLG. Interacts with CCND1. Post-translationally, phosphorylated.

The protein localises to the cell membrane. Its subcellular location is the cell junction. The protein resides in the tight junction. It localises to the nucleus. Functionally, TJP1, TJP2, and TJP3 are closely related scaffolding proteins that link tight junction (TJ) transmembrane proteins such as claudins, junctional adhesion molecules, and occludin to the actin cytoskeleton. The tight junction acts to limit movement of substances through the paracellular space and as a boundary between the compositionally distinct apical and basolateral plasma membrane domains of epithelial and endothelial cells. Binds and recruits PATJ to tight junctions where it connects and stabilizes apical and lateral components of tight junctions. Promotes cell-cycle progression through the sequestration of cyclin D1 (CCND1) at tight junctions during mitosis which prevents CCND1 degradation during M-phase and enables S-phase transition. With TJP1 and TJP2, participates in the junctional retention and stability of the transcription factor DBPA, but is not involved in its shuttling to the nucleus. Contrary to TJP2, TJP3 is dispensable for individual viability, embryonic development, epithelial differentiation, and the establishment of TJs, at least in the laboratory environment. This chain is Tight junction protein ZO-3 (TJP3), found in Homo sapiens (Human).